We begin with the raw amino-acid sequence, 1105 residues long: uncharacterized protein (1105 aa).

Belongs to the mycobacterial PPE family.

This is an uncharacterized protein from Mycobacterium tuberculosis (strain CDC 1551 / Oshkosh).